Consider the following 1174-residue polypeptide: Male determiner protein Mdmd(III) (1174 aa).

The span at 1 to 15 (MNATDAESRKPENKP) shows a compositional bias: basic and acidic residues. Disordered regions lie at residues 1-51 (MNAT…SGQR), 80-109 (KDGS…HPVE), and 136-259 (KQLS…LRRS). The segment covering 16 to 35 (SSESSSSGSTSGSSDGEVSS) has biased composition (low complexity). Positions 36–47 (KTYFKNNKSKVL) are enriched in polar residues. Positions 80–92 (KDGSNEMLPKEDS) are enriched in basic and acidic residues. Positions 93 to 102 (INTNHNYTTD) are enriched in polar residues. Over residues 138-153 (LSAYRSRSRSTRLSYS) the composition is skewed to low complexity. The span at 167–180 (SRYKKSVLRNRRTS) shows a compositional bias: basic residues. The segment covering 183–200 (HGRDSSTTKRSVSRDKDN) has biased composition (basic and acidic residues). The segment covering 201–223 (RLRRRIGSSRSHTRSHSRFRRSE) has biased composition (basic residues). The span at 235-259 (RSQERRHERRRSMSSDYERIALRRS) shows a compositional bias: basic and acidic residues. One can recognise an MIF4G domain in the interval 348 to 531 (KKYIHGYINK…KVLFQVRRDG (184 aa)). The 117-residue stretch at 641–757 (ALRRTIYLTL…SWDVLDCIKL (117 aa)) folds into the MI domain. A compositionally biased stretch (low complexity) spans 840–857 (SAPSSSSSSSLSSELSAP). 2 disordered regions span residues 840-1045 (SAPS…SRTK) and 1096-1133 (KDNY…NHSR). Over residues 869–909 (KKKHKGKNKKMTKKKNPSKKKEKTKKFVGKNKIAAKNKTIK) the composition is skewed to basic residues. Positions 910-924 (RRTDKDNSSSKDNFL) are enriched in basic and acidic residues. A compositionally biased stretch (low complexity) spans 926–957 (SESSSNESISLDSLSSELFAPSSYSSSESSND). Residues 963 to 1001 (KHKGKNKKMTKKKNPSNKKEKTKKKLSKNKKAPNKNTKK) are compositionally biased toward basic residues. Over residues 1010 to 1020 (SSESSISESKS) the composition is skewed to low complexity. Positions 1034–1045 (RKKRVTSKSRTK) are enriched in basic residues. Residues 1103–1118 (QNHEISQRHDSEIKRR) are compositionally biased toward basic and acidic residues. Positions 1119–1130 (REERKKRHHEKN) are enriched in basic residues.

This sequence belongs to the CWC22 family. As to quaternary structure, component of the spliceosome C complex.

The protein resides in the nucleus speckle. Its function is as follows. Male determiner protein (M-factor) that controls male somatic sexual differentiation. Acts as a dominant factor that regulates the mRNA splicing of transformer (tra) and doublesex (dsx) transcripts and promotes expression of male splice forms of tra and dsx. Probably acts as a component of the spliceosome C complex required for mRNA splicing factor and exon-junction complex (EJC) assembly. Hinders eIF4AIII from non-specifically binding RNA and escorts it to the splicing machinery to promote EJC assembly on mature mRNAs. This chain is Male determiner protein Mdmd(III), found in Musca domestica (House fly).